The sequence spans 334 residues: MSDLTKFNKFFLTPNKLNAFLRVIGLCGLFSVIAISFGIYSYTRNEIPNIASLFLIVLGSVVLFLAFVIHFAALFKRNKLLKKVNKENRTNLWQKEMGNFKAIESFEFFEQGPISSDILPSFYPTALYNFEPLPRQFKVTYKDGSEFVFGHIYAIKRSSNKTEKVACLIAITPAINSENHFFLTDANYSLNKNVAQFEALTENKKQENISLFVEKDSNFSFQNLDTEVLNKVLFNPLNVYAKFNVYNDTVHTYLFMSVPTTFMDTKLKVNEAFDDLVTNIKLQASYDFKTLNSMQKVVDLLHNKLIKKPESKSSSQKSVETEIEKEVKDKLAKN.

The next 2 membrane-spanning stretches (helical) occupy residues 19–39 (AFLR…SFGI) and 55–75 (LIVL…AALF). The disordered stretch occupies residues 308-334 (KPESKSSSQKSVETEIEKEVKDKLAKN). Residues 319–334 (VETEIEKEVKDKLAKN) show a composition bias toward basic and acidic residues.

It is found in the cell membrane. This is an uncharacterized protein from Mycoplasma genitalium (strain ATCC 33530 / DSM 19775 / NCTC 10195 / G37) (Mycoplasmoides genitalium).